Consider the following 355-residue polypeptide: Myricetin 7/4'-O-methyltransferase 2 (355 aa).

Asp-221 contacts S-adenosyl-L-methionine. The active-site Proton acceptor is His-259.

Belongs to the class I-like SAM-binding methyltransferase superfamily. Cation-independent O-methyltransferase family. As to quaternary structure, homodimer. As to expression, mainly expressed in leaves secreting glandular trichomes types 1 and 4 and, to a lesser extent, in storage trichomes type 6.

It catalyses the reaction quercetin + S-adenosyl-L-methionine = rhamnetin + S-adenosyl-L-homocysteine + H(+). The enzyme catalyses kaempferol + S-adenosyl-L-methionine = kaempferide + S-adenosyl-L-homocysteine + H(+). The catalysed reaction is myricetin + S-adenosyl-L-methionine = 7-O-methylmyricetin + S-adenosyl-L-homocysteine + H(+). It carries out the reaction kaempferide + S-adenosyl-L-methionine = 7,4'-O-dimethylkaempferol + S-adenosyl-L-homocysteine + H(+). It catalyses the reaction isorhamnetin + S-adenosyl-L-methionine = 3',4'-O-dimethylquercetin + S-adenosyl-L-homocysteine + 2 H(+). The enzyme catalyses 3',4',5,7-tetrahydroxy-3-methoxyflavone + S-adenosyl-L-methionine = 3',4',5-trihydroxy-3,7-dimethoxyflavone + S-adenosyl-L-homocysteine + H(+). The catalysed reaction is rhamnetin + S-adenosyl-L-methionine = 7,4'-O-dimethylquercetin + S-adenosyl-L-homocysteine + H(+). It carries out the reaction syringetin + S-adenosyl-L-methionine = 7,3',5'-O-trimethylmyricetin + S-adenosyl-L-homocysteine + H(+). It catalyses the reaction 3',4',5'-O-trimethylmyricetin + S-adenosyl-L-methionine = 7,3',4',5'-O-tetramethylmyricetin + S-adenosyl-L-homocysteine. It functions in the pathway flavonoid metabolism. Functionally, flavonoid 7/4'-O-methyltransferase involved in the biosynthesis of polymethoxylated flavonoids natural products such as myricetin derivatives, aroma compounds possessing antioxidant properties and exhibiting pharmacological activities such as anti-carcinogen, anti-viral, anti-thrombotic, anti-diabetic, anti-atherosclerotic, and anti-inflammatory effects. Catalyzes S-adenosylmethionine-dependent regioselective 7/4'-O-methylation of flavonoids; active on various hydroxylated flavonoid substrates, including myricetin, quercetin and kaempferol. Mediates the formation of 4'-methyl derivatives from kaempferol, 3'-methyl quercetin (isorhamnetin), 7-methyl quercetin (rhamnetin) and 3'-methyl myricetin, producing 4'-methyl kaempferol (kaempferide), 3',4'-dimethyl quercetin (4'-O-methyl isorhamnetin), 7,4'-dimethyl quercetin (4'-O-methyl rhamnetin, rhamnacene) and 3',4'-dimethyl myricetin, respectively. Triggers the 7-O-methylation of quercetin, myricetin, 4'-methyl kaempferol (kaempferide), 3-methyl quercetin, 3',5'-dimethyl myricetin (syringetin) and 3',4',5'-trimethyl myricetin, thus leading to production of 7-methyl quercetin (rhamnetin), 7-methyl myricetin, 7,4'-dimethyl kaempferol (7-O-methyl kaempferide), 3,7-dimethyl quercetin, 7,3',5'-trimethyl myricetin (7-O-methyl syringetin) and 7,3',4',5'-tetramethyl myricetin, respectively. This Solanum habrochaites (Wild tomato) protein is Myricetin 7/4'-O-methyltransferase 2.